Here is a 152-residue protein sequence, read N- to C-terminus: Arginine repressor (152 aa).

This sequence belongs to the ArgR family.

It is found in the cytoplasm. It participates in amino-acid biosynthesis; L-arginine biosynthesis [regulation]. Functionally, regulates arginine biosynthesis genes. In Caldicellulosiruptor bescii (strain ATCC BAA-1888 / DSM 6725 / KCTC 15123 / Z-1320) (Anaerocellum thermophilum), this protein is Arginine repressor.